Here is a 473-residue protein sequence, read N- to C-terminus: MAKNIGKITQIISAVVDVKFTNNGELPEILNALECYNDKQRIVLEVAQHIGDDTVRCIAMDSTEGLVRGVEVIDTGSPIRIPVGTETLGRIMNVVGEPIDGKGDIKSSNISSIYKPAPDFTNQSTERNILVTGIKVIDLLAPYTKGGKIGLFGGAGVGKTVLIMELINNVAKAHGGYTVFAGVGERTREGNDLYHEMIDSGVINLAEPEKSKVALVYGQMNEPPGARARVALSGLTIAESFRDMNEGQDVLFFVDNIFRFTQAGSEVSALLGRIPSAVGYQPTLATDMGELQERITSTKYGSITSVQAIYVPADDLTDPAPATSFAHLDATTVLSRQIAELGIYPAVDPLDSNSQVLDPMIVGEEHYSVARQVQQVLQTYKSLQDIIAILGMDELSEEDKLTVVRARKIQRFLSQPFHVAEVFTGAEGKFVNLADTIAGFKGLVEGKYDDLPEAAFYMVGTIDEAIEKAQTLK.

153–160 (GGAGVGKT) contacts ATP.

This sequence belongs to the ATPase alpha/beta chains family. F-type ATPases have 2 components, CF(1) - the catalytic core - and CF(0) - the membrane proton channel. CF(1) has five subunits: alpha(3), beta(3), gamma(1), delta(1), epsilon(1). CF(0) has three main subunits: a(1), b(2) and c(9-12). The alpha and beta chains form an alternating ring which encloses part of the gamma chain. CF(1) is attached to CF(0) by a central stalk formed by the gamma and epsilon chains, while a peripheral stalk is formed by the delta and b chains.

It localises to the cell inner membrane. It carries out the reaction ATP + H2O + 4 H(+)(in) = ADP + phosphate + 5 H(+)(out). In terms of biological role, produces ATP from ADP in the presence of a proton gradient across the membrane. The catalytic sites are hosted primarily by the beta subunits. The protein is ATP synthase subunit beta of Rickettsia massiliae (strain Mtu5).